The following is a 603-amino-acid chain: Penicillin-binding protein activator LpoA (603 aa).

Residues 1 to 26 form the signal peptide; that stretch reads MANMTPRKNSVTRLIAPVALALTLAA. The N-palmitoyl cysteine moiety is linked to residue C27. The S-diacylglycerol cysteine moiety is linked to residue C27.

Belongs to the LpoA family. As to quaternary structure, interacts with PBP1a.

The protein localises to the cell outer membrane. Regulator of peptidoglycan synthesis that is essential for the function of penicillin-binding protein 1A (PBP1a). This chain is Penicillin-binding protein activator LpoA, found in Aliivibrio fischeri (strain ATCC 700601 / ES114) (Vibrio fischeri).